The primary structure comprises 304 residues: Acetyl-coenzyme A carboxylase carboxyl transferase subunit beta (304 aa).

The region spanning 29-298 (LWTKCVSCAA…QAYRPSPQAS (270 aa)) is the CoA carboxyltransferase N-terminal domain. Residues C33, C36, C52, and C55 each coordinate Zn(2+). The C4-type zinc-finger motif lies at 33-55 (CVSCAALHYTKDFQLNLCVCPAC).

The protein belongs to the AccD/PCCB family. As to quaternary structure, acetyl-CoA carboxylase is a heterohexamer composed of biotin carboxyl carrier protein (AccB), biotin carboxylase (AccC) and two subunits each of ACCase subunit alpha (AccA) and ACCase subunit beta (AccD). Zn(2+) serves as cofactor.

It localises to the cytoplasm. It catalyses the reaction N(6)-carboxybiotinyl-L-lysyl-[protein] + acetyl-CoA = N(6)-biotinyl-L-lysyl-[protein] + malonyl-CoA. It functions in the pathway lipid metabolism; malonyl-CoA biosynthesis; malonyl-CoA from acetyl-CoA: step 1/1. Functionally, component of the acetyl coenzyme A carboxylase (ACC) complex. Biotin carboxylase (BC) catalyzes the carboxylation of biotin on its carrier protein (BCCP) and then the CO(2) group is transferred by the transcarboxylase to acetyl-CoA to form malonyl-CoA. In Gloeobacter violaceus (strain ATCC 29082 / PCC 7421), this protein is Acetyl-coenzyme A carboxylase carboxyl transferase subunit beta.